Reading from the N-terminus, the 93-residue chain is Small ribosomal subunit protein uS19 (93 aa).

This sequence belongs to the universal ribosomal protein uS19 family.

In terms of biological role, protein S19 forms a complex with S13 that binds strongly to the 16S ribosomal RNA. In Tropheryma whipplei (strain TW08/27) (Whipple's bacillus), this protein is Small ribosomal subunit protein uS19.